The sequence spans 176 residues: Small ribosomal subunit protein uS5 (176 aa).

One can recognise an S5 DRBM domain in the interval 14–77 (MQEKLIHINR…DQARRWMTSI (64 aa)).

This sequence belongs to the universal ribosomal protein uS5 family. In terms of assembly, part of the 30S ribosomal subunit. Contacts proteins S4 and S8.

Functionally, with S4 and S12 plays an important role in translational accuracy. Its function is as follows. Located at the back of the 30S subunit body where it stabilizes the conformation of the head with respect to the body. The polypeptide is Small ribosomal subunit protein uS5 (Acidithiobacillus ferrooxidans (strain ATCC 23270 / DSM 14882 / CIP 104768 / NCIMB 8455) (Ferrobacillus ferrooxidans (strain ATCC 23270))).